Here is a 100-residue protein sequence, read N- to C-terminus: Small ribosomal subunit protein uS14c (100 aa).

This sequence belongs to the universal ribosomal protein uS14 family. As to quaternary structure, part of the 30S ribosomal subunit.

The protein resides in the plastid. It localises to the chloroplast. In terms of biological role, binds 16S rRNA, required for the assembly of 30S particles. The polypeptide is Small ribosomal subunit protein uS14c (Adiantum capillus-veneris (Maidenhair fern)).